We begin with the raw amino-acid sequence, 498 residues long: 3-octaprenyl-4-hydroxybenzoate carboxy-lyase (498 aa).

Asn-176 provides a ligand contact to Mn(2+). Prenylated FMN is bound by residues 179–181, 193–195, and 198–199; these read IYR, RWL, and RG. Glu-242 is a Mn(2+) binding site. Asp-291 functions as the Proton donor in the catalytic mechanism.

It belongs to the UbiD family. In terms of assembly, homohexamer. Prenylated FMN serves as cofactor. Mn(2+) is required as a cofactor.

The protein localises to the cell membrane. It catalyses the reaction a 4-hydroxy-3-(all-trans-polyprenyl)benzoate + H(+) = a 2-(all-trans-polyprenyl)phenol + CO2. The protein operates within cofactor biosynthesis; ubiquinone biosynthesis. In terms of biological role, catalyzes the decarboxylation of 3-octaprenyl-4-hydroxy benzoate to 2-octaprenylphenol, an intermediate step in ubiquinone biosynthesis. In Escherichia coli O6:K15:H31 (strain 536 / UPEC), this protein is 3-octaprenyl-4-hydroxybenzoate carboxy-lyase.